We begin with the raw amino-acid sequence, 116 residues long: Fluoride-specific ion channel FluC 1 (116 aa).

4 helical membrane passes run 1–21, 32–52, 54–74, and 93–113; these read MYAPLFVAIGGFFGAMARYLV, FPLGTLIVNLLGSFLLGWLAG, GAADAAKLLVGTGFMGAFTTF, and VVVYLAATYLCGVWLAWLGYH. Na(+)-binding residues include Gly69 and Thr72.

Belongs to the fluoride channel Fluc/FEX (TC 1.A.43) family.

It is found in the cell membrane. It carries out the reaction fluoride(in) = fluoride(out). Na(+) is not transported, but it plays an essential structural role and its presence is essential for fluoride channel function. Fluoride-specific ion channel. Important for reducing fluoride concentration in the cell, thus reducing its toxicity. The polypeptide is Fluoride-specific ion channel FluC 1 (Geobacillus kaustophilus (strain HTA426)).